The primary structure comprises 240 residues: Adapter protein MecA (240 aa).

The protein belongs to the MecA family. In terms of assembly, homodimer.

Its function is as follows. Enables the recognition and targeting of unfolded and aggregated proteins to the ClpC protease or to other proteins involved in proteolysis. In Streptococcus mutans serotype c (strain ATCC 700610 / UA159), this protein is Adapter protein MecA.